The following is a 174-amino-acid chain: Gamma-crystallin D (174 aa).

Beta/gamma crystallin 'Greek key' domains follow at residues 2 to 40 and 41 to 83; these read GKIT…RVDS and GCWM…RLIP. The interval 84–87 is connecting peptide; that stretch reads HAGS. 2 Beta/gamma crystallin 'Greek key' domains span residues 88–128 and 129–171; these read HRIR…NVLE and GCWV…RRVM.

The protein belongs to the beta/gamma-crystallin family. In terms of tissue distribution, detected in the superior olivary complex of the auditory hindbrain.

In terms of biological role, crystallins are the dominant structural components of the vertebrate eye lens. The polypeptide is Gamma-crystallin D (Crygd) (Mus musculus (Mouse)).